The chain runs to 143 residues: Nucleoside diphosphate kinase (143 aa).

6 residues coordinate ATP: K11, F59, R87, T93, R104, and N114. The active-site Pros-phosphohistidine intermediate is H117.

This sequence belongs to the NDK family. In terms of assembly, homotetramer. Mg(2+) serves as cofactor.

Its subcellular location is the cytoplasm. It catalyses the reaction a 2'-deoxyribonucleoside 5'-diphosphate + ATP = a 2'-deoxyribonucleoside 5'-triphosphate + ADP. The enzyme catalyses a ribonucleoside 5'-diphosphate + ATP = a ribonucleoside 5'-triphosphate + ADP. Major role in the synthesis of nucleoside triphosphates other than ATP. The ATP gamma phosphate is transferred to the NDP beta phosphate via a ping-pong mechanism, using a phosphorylated active-site intermediate. In Tolumonas auensis (strain DSM 9187 / NBRC 110442 / TA 4), this protein is Nucleoside diphosphate kinase.